Reading from the N-terminus, the 89-residue chain is Small ribosomal subunit protein uS15 (89 aa).

It belongs to the universal ribosomal protein uS15 family. As to quaternary structure, part of the 30S ribosomal subunit. Forms a bridge to the 50S subunit in the 70S ribosome, contacting the 23S rRNA.

One of the primary rRNA binding proteins, it binds directly to 16S rRNA where it helps nucleate assembly of the platform of the 30S subunit by binding and bridging several RNA helices of the 16S rRNA. In terms of biological role, forms an intersubunit bridge (bridge B4) with the 23S rRNA of the 50S subunit in the ribosome. The protein is Small ribosomal subunit protein uS15 of Lactococcus lactis subsp. lactis (strain IL1403) (Streptococcus lactis).